Reading from the N-terminus, the 96-residue chain is MSAVTVNDDGLVLRLYIQPKASRDSIVGLHGDEVKVAITAPPVDGQANSHLVKFLGKQFRVAKSQVVIEKGELGRHKQIKIINPQQIPPEVAALIN.

Belongs to the UPF0235 family.

This chain is UPF0235 protein YggU, found in Escherichia coli O157:H7.